Reading from the N-terminus, the 169-residue chain is Cytochrome c oxidase subunit 4 isoform 1, mitochondrial (169 aa).

Residues 1-22 (MLATRALSLIGKRAISTSVCLR) constitute a mitochondrion transit peptide. Residues 23–98 (AHGSVVKSED…SFAEMNKGTN (76 aa)) lie on the Mitochondrial matrix side of the membrane. Lys29 carries the post-translational modification N6-acetyllysine; alternate. N6-succinyllysine; alternate is present on Lys29. N6-acetyllysine is present on Lys53. A phosphoserine mark is found at Ser56 and Ser58. N6-acetyllysine; alternate is present on Lys60. Lys60 carries the post-translational modification N6-succinyllysine; alternate. At Lys67 the chain carries N6-acetyllysine. Residues 99-124 (EWKTVVGLAMFFIGFTALVLIWEKSY) traverse the membrane as a helical segment. Over 125–169 (VYGPIPHTFDRDWVAMQTKRMLDMKVNPIQGFSAKWDYNKNEWKK) the chain is Mitochondrial intermembrane.

This sequence belongs to the cytochrome c oxidase IV family. Component of the cytochrome c oxidase (complex IV, CIV), a multisubunit enzyme composed of 14 subunits. The complex is composed of a catalytic core of 3 subunits MT-CO1, MT-CO2 and MT-CO3, encoded in the mitochondrial DNA, and 11 supernumerary subunits COX4I, COX5A, COX5B, COX6A, COX6B, COX6C, COX7A, COX7B, COX7C, COX8 and NDUFA4, which are encoded in the nuclear genome. The complex exists as a monomer or a dimer and forms supercomplexes (SCs) in the inner mitochondrial membrane with NADH-ubiquinone oxidoreductase (complex I, CI) and ubiquinol-cytochrome c oxidoreductase (cytochrome b-c1 complex, complex III, CIII), resulting in different assemblies (supercomplex SCI(1)III(2)IV(1) and megacomplex MCI(2)III(2)IV(2)). Interacts with PHB2; the interaction decreases in absence of SPHK2. Interacts with AFG1L. Interacts with ABCB7; this interaction allows the regulation of cellular iron homeostasis and cellular reactive oxygen species (ROS) levels in cardiomyocytes. Interacts with FLVCR2; this interaction occurs in the absence of heme and is disrupted upon heme binding. Interacts with IRGC.

Its subcellular location is the mitochondrion inner membrane. The protein operates within energy metabolism; oxidative phosphorylation. Its function is as follows. Component of the cytochrome c oxidase, the last enzyme in the mitochondrial electron transport chain which drives oxidative phosphorylation. The respiratory chain contains 3 multisubunit complexes succinate dehydrogenase (complex II, CII), ubiquinol-cytochrome c oxidoreductase (cytochrome b-c1 complex, complex III, CIII) and cytochrome c oxidase (complex IV, CIV), that cooperate to transfer electrons derived from NADH and succinate to molecular oxygen, creating an electrochemical gradient over the inner membrane that drives transmembrane transport and the ATP synthase. Cytochrome c oxidase is the component of the respiratory chain that catalyzes the reduction of oxygen to water. Electrons originating from reduced cytochrome c in the intermembrane space (IMS) are transferred via the dinuclear copper A center (CU(A)) of subunit 2 and heme A of subunit 1 to the active site in subunit 1, a binuclear center (BNC) formed by heme A3 and copper B (CU(B)). The BNC reduces molecular oxygen to 2 water molecules using 4 electrons from cytochrome c in the IMS and 4 protons from the mitochondrial matrix. The polypeptide is Cytochrome c oxidase subunit 4 isoform 1, mitochondrial (Cox4i1) (Rattus norvegicus (Rat)).